The primary structure comprises 244 residues: 5-oxoprolinase subunit A (244 aa).

Belongs to the LamB/PxpA family. Forms a complex composed of PxpA, PxpB and PxpC.

The catalysed reaction is 5-oxo-L-proline + ATP + 2 H2O = L-glutamate + ADP + phosphate + H(+). In terms of biological role, catalyzes the cleavage of 5-oxoproline to form L-glutamate coupled to the hydrolysis of ATP to ADP and inorganic phosphate. The polypeptide is 5-oxoprolinase subunit A (Salmonella typhi).